The following is a 624-amino-acid chain: Carbon monoxide dehydrogenase (624 aa).

Positions 37, 46, 49, 54, and 65 each coordinate [4Fe-4S] cluster. His-256, Cys-292, Cys-336, Cys-444, Cys-475, and Cys-516 together coordinate [Ni-4Fe-5S] cluster.

This sequence belongs to the Ni-containing carbon monoxide dehydrogenase family. Homodimer. [4Fe-4S] cluster is required as a cofactor. It depends on [Ni-4Fe-5S] cluster as a cofactor.

It catalyses the reaction CO + 2 oxidized [2Fe-2S]-[ferredoxin] + H2O = 2 reduced [2Fe-2S]-[ferredoxin] + CO2 + 2 H(+). Its function is as follows. CODH oxidizes carbon monoxide coupled, via CooF, to the reduction of a hydrogen cation by a hydrogenase (possibly CooH). The chain is Carbon monoxide dehydrogenase (cooS) from Methanocaldococcus jannaschii (strain ATCC 43067 / DSM 2661 / JAL-1 / JCM 10045 / NBRC 100440) (Methanococcus jannaschii).